Here is a 275-residue protein sequence, read N- to C-terminus: Large ribosomal subunit protein uL2 (275 aa).

Polar residues predominate over residues 36–49; it reads TQSSTAGRNNNGRI. 2 disordered regions span residues 36 to 59 and 224 to 275; these read TQSSTAGRNNNGRITTRHKGGGHK and AMNP…RHKR. Residues 50 to 59 are compositionally biased toward basic residues; the sequence is TTRHKGGGHK.

This sequence belongs to the universal ribosomal protein uL2 family. Part of the 50S ribosomal subunit. Forms a bridge to the 30S subunit in the 70S ribosome.

In terms of biological role, one of the primary rRNA binding proteins. Required for association of the 30S and 50S subunits to form the 70S ribosome, for tRNA binding and peptide bond formation. It has been suggested to have peptidyltransferase activity; this is somewhat controversial. Makes several contacts with the 16S rRNA in the 70S ribosome. This is Large ribosomal subunit protein uL2 from Burkholderia vietnamiensis (strain G4 / LMG 22486) (Burkholderia cepacia (strain R1808)).